The following is an 83-amino-acid chain: Sulfur carrier protein TusA (83 aa).

Cys20 acts as the Cysteine persulfide intermediate in catalysis.

Belongs to the sulfur carrier protein TusA family.

Its subcellular location is the cytoplasm. Its function is as follows. Sulfur carrier protein which probably makes part of a sulfur-relay system. The chain is Sulfur carrier protein TusA from Pseudoalteromonas atlantica (strain T6c / ATCC BAA-1087).